Here is a 245-residue protein sequence, read N- to C-terminus: 1-(5-phosphoribosyl)-5-[(5-phosphoribosylamino)methylideneamino] imidazole-4-carboxamide isomerase (245 aa).

The active-site Proton acceptor is the aspartate 8. Aspartate 130 serves as the catalytic Proton donor.

Belongs to the HisA/HisF family.

It is found in the cytoplasm. It carries out the reaction 1-(5-phospho-beta-D-ribosyl)-5-[(5-phospho-beta-D-ribosylamino)methylideneamino]imidazole-4-carboxamide = 5-[(5-phospho-1-deoxy-D-ribulos-1-ylimino)methylamino]-1-(5-phospho-beta-D-ribosyl)imidazole-4-carboxamide. Its pathway is amino-acid biosynthesis; L-histidine biosynthesis; L-histidine from 5-phospho-alpha-D-ribose 1-diphosphate: step 4/9. The sequence is that of 1-(5-phosphoribosyl)-5-[(5-phosphoribosylamino)methylideneamino] imidazole-4-carboxamide isomerase from Pseudomonas syringae pv. tomato (strain ATCC BAA-871 / DC3000).